A 216-amino-acid polypeptide reads, in one-letter code: DNA gyrase subunit B (216 aa).

Residues serine 140–valine 216 enclose the Toprim domain.

Belongs to the type II topoisomerase GyrB family. In terms of assembly, heterotetramer, composed of two GyrA and two GyrB chains. In the heterotetramer, GyrA contains the active site tyrosine that forms a transient covalent intermediate with DNA, while GyrB binds cofactors and catalyzes ATP hydrolysis.

The protein resides in the cytoplasm. It carries out the reaction ATP-dependent breakage, passage and rejoining of double-stranded DNA.. In terms of biological role, a type II topoisomerase that negatively supercoils closed circular double-stranded (ds) DNA in an ATP-dependent manner to modulate DNA topology and maintain chromosomes in an underwound state. Negative supercoiling favors strand separation, and DNA replication, transcription, recombination and repair, all of which involve strand separation. Also able to catalyze the interconversion of other topological isomers of dsDNA rings, including catenanes and knotted rings. Type II topoisomerases break and join 2 DNA strands simultaneously in an ATP-dependent manner. The polypeptide is DNA gyrase subunit B (gyrB) (Acinetobacter sp. (strain SEIP 12.81)).